The primary structure comprises 763 residues: MAP7 domain-containing protein 2 (763 aa).

Positions 1–11 are enriched in gly residues; that stretch reads MERGGGGGFGT. 4 disordered regions span residues 1–63, 96–124, 149–268, and 300–540; these read MERG…KERR, WRKL…LREE, SWGA…DVGK, and PLRR…KQKE. The span at 52 to 63 shows a compositional bias: basic and acidic residues; that stretch reads SGERQRLAKERR. Residues 54-147 are a coiled coil; it reads ERQRLAKERR…RTQQLELKKK (94 aa). Residues 192–206 are compositionally biased toward polar residues; that stretch reads ESTNACDKLSTSTMS. 3 stretches are compositionally biased toward basic and acidic residues: residues 355–371, 385–400, and 430–540; these read MPKR…EREG, ALEK…EKHA, and LAEK…KQKE.

The protein belongs to the MAP7 family. In terms of assembly, interacts (via N-terminus) with microtubules; facilitates microtubule stabilization. Interacts with kinesin-1 family members, KIF5A, KIF5B and KIF5C.

Its subcellular location is the cytoplasm. It is found in the cytoskeleton. The protein resides in the microtubule organizing center. The protein localises to the centrosome. It localises to the midbody. Its subcellular location is the cell projection. It is found in the neuron projection. The protein resides in the axon. Microtubule-stabilizing protein involved in the control of cell motility and neurite outgrowth. Acts as a critical cofactor for kinesin transport; in the proximal axon regulates kinesin-1 family members, KIF5A, KIF5B and KIF5C recruitment to microtubules and contributes to kinesin-1-mediated transport in the axons. The chain is MAP7 domain-containing protein 2 (MAP7D2) from Pongo abelii (Sumatran orangutan).